The primary structure comprises 913 residues: Probable TonB-dependent receptor HI_1217 (913 aa).

Positions 1-27 (MKKAIKLNLITLGLINTIGMTITQAQA) are cleaved as a signal peptide. The region spanning 42-165 (SNDKKPFTEA…LAGSANFRTL (124 aa)) is the TBDR plug domain. Positions 176–913 (PFGIILKGMT…TYILSLNYKF (738 aa)) constitute a TBDR beta-barrel domain. The TonB C-terminal box motif lies at 896–913 (LYNFARGRTYILSLNYKF).

This sequence belongs to the TonB-dependent receptor family.

The protein resides in the cell outer membrane. Probable receptor, TonB-dependent. In Haemophilus influenzae (strain ATCC 51907 / DSM 11121 / KW20 / Rd), this protein is Probable TonB-dependent receptor HI_1217.